A 235-amino-acid polypeptide reads, in one-letter code: Purine nucleoside phosphorylase DeoD-type (235 aa).

His-4 is a binding site for a purine D-ribonucleoside. Residues Gly-20, Arg-24, Arg-43, and 87–90 (RVGT) each bind phosphate. Residues Glu-162, 179 to 181 (EME), and 203 to 204 (SD) each bind a purine D-ribonucleoside. Asp-204 (proton donor) is an active-site residue.

The protein belongs to the PNP/UDP phosphorylase family. Homohexamer; trimer of homodimers.

The catalysed reaction is a purine D-ribonucleoside + phosphate = a purine nucleobase + alpha-D-ribose 1-phosphate. It carries out the reaction a purine 2'-deoxy-D-ribonucleoside + phosphate = a purine nucleobase + 2-deoxy-alpha-D-ribose 1-phosphate. Functionally, catalyzes the reversible phosphorolytic breakdown of the N-glycosidic bond in the beta-(deoxy)ribonucleoside molecules, with the formation of the corresponding free purine bases and pentose-1-phosphate. The chain is Purine nucleoside phosphorylase DeoD-type from Bacillus cereus (strain ZK / E33L).